A 450-amino-acid chain; its full sequence is UDP-N-acetylmuramoylalanine--D-glutamate ligase (450 aa).

119-125 (GSNGKTT) contacts ATP.

It belongs to the MurCDEF family.

Its subcellular location is the cytoplasm. It catalyses the reaction UDP-N-acetyl-alpha-D-muramoyl-L-alanine + D-glutamate + ATP = UDP-N-acetyl-alpha-D-muramoyl-L-alanyl-D-glutamate + ADP + phosphate + H(+). The protein operates within cell wall biogenesis; peptidoglycan biosynthesis. Functionally, cell wall formation. Catalyzes the addition of glutamate to the nucleotide precursor UDP-N-acetylmuramoyl-L-alanine (UMA). The protein is UDP-N-acetylmuramoylalanine--D-glutamate ligase of Streptococcus pneumoniae (strain Taiwan19F-14).